Consider the following 389-residue polypeptide: Abscission/NoCut checkpoint regulator (389 aa).

The FYVE-type zinc-finger motif lies at 1-58 (MESRCYGCAVKFTLFKKEYGCKNCGRAFCNGCLSFSALVPRAGNTQQKVCKQCHTILT). The Zn(2+) site is built by Cys5, Cys8, Cys21, Cys24, Cys29, Cys32, Cys50, and Cys53. Ser69 carries the phosphoserine modification. Residues 99-112 (DQAIAERLARLRQE) carry the MIM1-A motif. Residue Lys132 forms a Glycyl lysine isopeptide (Lys-Gly) (interchain with G-Cter in SUMO2) linkage. Disordered stretches follow at residues 158–177 (PSHT…QAQQ) and 204–227 (QNDL…SQSL). The span at 167–177 (QAPDTRTQAQQ) shows a compositional bias: low complexity. Residues 214 to 226 (SQRTNSQGQASQS) show a composition bias toward polar residues. Residue Ser219 is modified to Phosphoserine. The stretch at 226-261 (SLEEEKYKLLAEAAVELQEENTRQERILALAKRLAV) forms a coiled coil. The MIM1-B signature appears at 252 to 265 (ILALAKRLAVLKGQ). A Phosphoserine modification is found at Ser280.

As to quaternary structure, interacts (via MIM1-B) with VPS4A; interaction takes place at the midbody ring following cytokinesis checkpoint activation.

It localises to the cytoplasm. It is found in the cytoskeleton. The protein resides in the microtubule organizing center. The protein localises to the centrosome. Its subcellular location is the cleavage furrow. It localises to the midbody. It is found in the midbody ring. In terms of biological role, key regulator of abscission step in cytokinesis: part of the cytokinesis checkpoint, a process required to delay abscission to prevent both premature resolution of intercellular chromosome bridges and accumulation of DNA damage. Together with CHMP4C, required to retain abscission-competent VPS4 (VPS4A and/or VPS4B) at the midbody ring until abscission checkpoint signaling is terminated at late cytokinesis. Deactivation of AURKB results in dephosphorylation of CHMP4C followed by its dissociation from ZFYVE19/ANCHR and VPS4 and subsequent abscission. This Mus musculus (Mouse) protein is Abscission/NoCut checkpoint regulator (Zfyve19).